The primary structure comprises 462 residues: Exodeoxyribonuclease 7 large subunit (462 aa).

It belongs to the XseA family. Heterooligomer composed of large and small subunits.

The protein resides in the cytoplasm. It catalyses the reaction Exonucleolytic cleavage in either 5'- to 3'- or 3'- to 5'-direction to yield nucleoside 5'-phosphates.. In terms of biological role, bidirectionally degrades single-stranded DNA into large acid-insoluble oligonucleotides, which are then degraded further into small acid-soluble oligonucleotides. This chain is Exodeoxyribonuclease 7 large subunit, found in Proteus mirabilis (strain HI4320).